We begin with the raw amino-acid sequence, 257 residues long: Capsid protein (257 aa).

Belongs to the geminiviridae capsid protein family.

The protein localises to the virion. In terms of biological role, encapsidates the viral DNA into characteristic twinned ('geminate') particles. Plays a role in protection of the genome from degradation, virus acquisition and transmission by insect vectors, infectivity, and systemic movement. The polypeptide is Capsid protein (Capsicum annuum (Capsicum pepper)).